Here is a 190-residue protein sequence, read N- to C-terminus: Corticoliberin (190 aa).

Residues 1–24 form the signal peptide; that stretch reads MRLPLLVSVGVLLVALLPSPPCRA. The propeptide occupies 25–147; that stretch reads LLSRGPIPGA…QEAPAARKRR (123 aa). 2 disordered regions span residues 33 to 53 and 115 to 151; these read GARQ…LPQP and PRRP…SQEP. Positions 41-53 are enriched in low complexity; that stretch reads PQPLSFFQPLPQP. Alanine 188 bears the Alanine amide mark.

The protein belongs to the sauvagine/corticotropin-releasing factor/urotensin I family. In terms of assembly, interacts (via C-terminus) with CRFR1 (via N-terminal extracellular domain). Produced by the hypothalamus.

The protein localises to the secreted. Functionally, hormone regulating the release of corticotropin from pituitary gland. Induces NLRP6 in intestinal epithelial cells, hence may influence gut microbiota profile. In Ovis aries (Sheep), this protein is Corticoliberin (CRH).